A 560-amino-acid polypeptide reads, in one-letter code: Radial spoke head protein 3 homolog (560 aa).

2 disordered regions span residues 134 to 186 and 225 to 249; these read RKRG…EEPM and ARKR…PVEG. The span at 153–162 shows a compositional bias: polar residues; it reads RAPSTYTYTS. Residues 215–239 adopt a coiled-coil conformation; the sequence is DSLELQRQREARKRALARKQAQEQL. At Thr-286 the chain carries Phosphothreonine; by MAPK1. A coiled-coil region spans residues 331-385; the sequence is LEVMEEEELANLRASQREYEELRNSERAEVQRLEEQERRHREEKERRKKQQWEIM. Disordered stretches follow at residues 354-375, 473-498, and 526-560; these read NSER…EEKE, HGED…ESLE, and DRRS…EELS.

Belongs to the flagellar radial spoke RSP3 family. As to quaternary structure, component of the axonemal radial spoke 1 (RS1) and 2 (RS2) complexes, at least composed of spoke head proteins RSPH1, RSPH3, RSPH9 and the cilia-specific component RSPH4A or sperm-specific component RSPH6A, spoke stalk proteins RSPH14, DNAJB13, DYDC1, ROPN1L and NME5, and the RS1 complex-specific anchor protein IQUB. Interacts with IQUB. Interacts with phosphorylated MAPK1. Interacts with MEK1. Interacts with PKA regulatory subunits PRKAR1A and PRKAR1B. Interacts with RSPH1. Interacts with RSPH4A. Interacts with RSPH6A. Interacts with RSPH9. Interacts with LRRC23.

It is found in the cytoplasm. The protein localises to the cytoskeleton. The protein resides in the cilium axoneme. Its subcellular location is the flagellum axoneme. In terms of biological role, functions as part of axonemal radial spoke complexes that play an important part in the motility of sperm and cilia. Functions as a protein kinase A-anchoring protein that scaffolds the cAMP-dependent protein kinase holoenzyme. May serve as a point of convergence for MAPK and PKA signaling in cilia. In Homo sapiens (Human), this protein is Radial spoke head protein 3 homolog (RSPH3).